The following is a 183-amino-acid chain: Archaemetzincin (183 aa).

His-131 is a binding site for Zn(2+). Glu-132 (proton acceptor) is an active-site residue. The Zn(2+) site is built by His-135, His-141, Cys-142, Cys-147, and Cys-166.

This sequence belongs to the peptidase M54 family. In terms of assembly, monomer. Zn(2+) serves as cofactor.

Functionally, probable zinc metalloprotease whose natural substrate is unknown. This chain is Archaemetzincin, found in Saccharolobus solfataricus (strain ATCC 35092 / DSM 1617 / JCM 11322 / P2) (Sulfolobus solfataricus).